The following is a 387-amino-acid chain: NifS-like protein (387 aa).

Pyridoxal 5'-phosphate contacts are provided by residues 58–59 (SE) and 184–186 (SIN).

This sequence belongs to the class-V pyridoxal-phosphate-dependent aminotransferase family. NifS/IscS subfamily. It depends on pyridoxal 5'-phosphate as a cofactor.

Its subcellular location is the virion. The polypeptide is NifS-like protein (African swine fever virus (isolate Tick/South Africa/Pretoriuskop Pr4/1996) (ASFV)).